The primary structure comprises 324 residues: COP9 signalosome complex subunit 6 (324 aa).

The region spanning 38–171 (VALHPLVILN…VSVFESVIDI (134 aa)) is the MPN domain.

This sequence belongs to the peptidase M67A family. CSN6 subfamily. Component of the CSN complex, composed of COPS1/GPS1, COPS2, COPS3, COPS4, COPS5, COPS6, COPS7 (COPS7A or COPS7B), COPS8 and COPS9. In the complex, it probably interacts directly with COPS2, COPS4, COPS5, COPS7 (COPS7A or COPS7B) and COPS9. Interacts with the translation initiation factor EIF3S6. Interacts weakly with RBX1. Directly interacts with COP1 and 14-3-3 protein sigma/SFN. Interacts with ERCC6.

The protein resides in the cytoplasm. It localises to the nucleus. In terms of biological role, component of the COP9 signalosome complex (CSN), a complex involved in various cellular and developmental processes. The CSN complex is an essential regulator of the ubiquitin (Ubl) conjugation pathway by mediating the deneddylation of the cullin subunits of SCF-type E3 ligase complexes, leading to decrease the Ubl ligase activity of SCF-type complexes such as SCF, CSA or DDB2. The complex is also involved in phosphorylation of p53/TP53, c-jun/JUN, IkappaBalpha/NFKBIA, ITPK1 and IRF8, possibly via its association with CK2 and PKD kinases. CSN-dependent phosphorylation of TP53 and JUN promotes and protects degradation by the Ubl system, respectively. Has some glucocorticoid receptor-responsive activity. Stabilizes COP1 through reducing COP1 auto-ubiquitination and decelerating COP1 turnover rate, hence regulates the ubiquitination of COP1 targets, including SFN. This is COP9 signalosome complex subunit 6 (COPS6) from Bos taurus (Bovine).